A 108-amino-acid chain; its full sequence is UPF0060 membrane protein Rsph17029_0436 (108 aa).

The next 4 membrane-spanning stretches (helical) occupy residues 5–25, 32–52, 62–82, and 86–106; these read LAAY…VWAW, ALWL…LALT, AVYG…VEGV, and RWDM…LWAP.

The protein belongs to the UPF0060 family.

It localises to the cell inner membrane. The polypeptide is UPF0060 membrane protein Rsph17029_0436 (Cereibacter sphaeroides (strain ATCC 17029 / ATH 2.4.9) (Rhodobacter sphaeroides)).